Here is a 616-residue protein sequence, read N- to C-terminus: UvrABC system protein C (616 aa).

A GIY-YIG domain is found at 12–97 (NDAGVYQYFD…IKQLKPKYNI (86 aa)). In terms of domain architecture, UVR spans 203 to 238 (TKLISKLNEKMLQYSNDFRFEEAMTLRDRIKTIEKS).

This sequence belongs to the UvrC family. As to quaternary structure, interacts with UvrB in an incision complex.

The protein localises to the cytoplasm. Its function is as follows. The UvrABC repair system catalyzes the recognition and processing of DNA lesions. UvrC both incises the 5' and 3' sides of the lesion. The N-terminal half is responsible for the 3' incision and the C-terminal half is responsible for the 5' incision. This Aliarcobacter butzleri (strain RM4018) (Arcobacter butzleri) protein is UvrABC system protein C.